A 319-amino-acid polypeptide reads, in one-letter code: Protease HtpX homolog (319 aa).

A run of 2 helical transmembrane segments spans residues 6–26 (TAMLLAFMTALFMAVGYVIGG) and 28–48 (GGMMIALLMAAGMNFFSYWNS). Position 130 (histidine 130) interacts with Zn(2+). Glutamate 131 is an active-site residue. Histidine 134 contacts Zn(2+). 2 consecutive transmembrane segments (helical) span residues 145 to 165 (LTATLAGAISMLGNFAFFFGG) and 172 to 192 (PLGFVGVLIAMIVAPFAAMLV). Glutamate 201 serves as a coordination point for Zn(2+). The disordered stretch occupies residues 279–319 (REMSAGSTAPARPDNAVRRSRSVPKTGWGRGGSEPPKGPWS).

This sequence belongs to the peptidase M48B family. Zn(2+) serves as cofactor.

The protein resides in the cell inner membrane. The chain is Protease HtpX homolog from Sinorhizobium fredii (strain NBRC 101917 / NGR234).